The following is a 197-amino-acid chain: Phosphoheptose isomerase (197 aa).

The region spanning 36 to 197 (MVQCLVSEGK…IDQQLFGSTE (162 aa)) is the SIS domain. Position 51-53 (51-53 (NGG)) interacts with substrate. H60 and E64 together coordinate Zn(2+). Substrate is bound by residues E64, 93–94 (ND), 119–121 (STS), S124, and Q174. Zn(2+) contacts are provided by Q174 and H182.

Belongs to the SIS family. GmhA subfamily. Homotetramer. The cofactor is Zn(2+).

Its subcellular location is the cytoplasm. It catalyses the reaction 2 D-sedoheptulose 7-phosphate = D-glycero-alpha-D-manno-heptose 7-phosphate + D-glycero-beta-D-manno-heptose 7-phosphate. It participates in carbohydrate biosynthesis; D-glycero-D-manno-heptose 7-phosphate biosynthesis; D-glycero-alpha-D-manno-heptose 7-phosphate and D-glycero-beta-D-manno-heptose 7-phosphate from sedoheptulose 7-phosphate: step 1/1. In terms of biological role, catalyzes the isomerization of sedoheptulose 7-phosphate in D-glycero-D-manno-heptose 7-phosphate. The chain is Phosphoheptose isomerase from Chromohalobacter salexigens (strain ATCC BAA-138 / DSM 3043 / CIP 106854 / NCIMB 13768 / 1H11).